We begin with the raw amino-acid sequence, 568 residues long: N66 matrix protein (568 aa).

A signal peptide spans 1-22 (MWRMTTLLHLTALLVLIPLCHC). Residues 55–567 (AGFSYNRDIC…KHPLRVYKNS (513 aa)) enclose the Alpha-carbonic anhydrase domain. Residues H154, H156, and H179 each coordinate Zn(2+). Positions 259–421 (NGNNGNNGNG…NGYNGDNGNS (163 aa)) are disordered. The segment covering 280 to 290 (GNNGNGNGNNG) has biased composition (gly residues). Positions 291-318 (YNGNNGYNGNNGNNGNGNNDNNGNDNNG) are enriched in low complexity. Composition is skewed to gly residues over residues 319–352 (NNGG…GNNG) and 362–380 (NGNG…GNNG). A glycan (N-linked (GlcNAc...) asparagine) is linked at N389. Gly residues predominate over residues 390-413 (GSNGNNGGNGNNGNNGDNGNGDNG). A substrate-binding site is contributed by 506–507 (TT). A glycan (N-linked (GlcNAc...) asparagine) is linked at N511.

It belongs to the alpha-carbonic anhydrase family. In terms of assembly, homooligomer; disulfide-linked. May also be disulfide-linked to insoluble organic matrix. The cofactor is Zn(2+). As to expression, expressed in both the dorsal region of the mantle and the mantle edge. Is dispersed in calcium carbonate and also linked by disulfide bonds to the organic core of nacre.

It is found in the secreted. The protein resides in the extracellular space. It localises to the extracellular matrix. It carries out the reaction hydrogencarbonate + H(+) = CO2 + H2O. In terms of biological role, acts as a negative regulator for calcification in the shells of mollusks. May function both as a calcium concentrator and as a carbonic anhydrase required for production of carbonate ions, which are assembled to CaCO(3) at mineralization sites. Is important for shell formation in both the calcitic prismatic layer and the aragonitic nacreous layer. This is N66 matrix protein from Pinctada maxima (Silver-lipped pearl oyster).